We begin with the raw amino-acid sequence, 397 residues long: Troponin T, skeletal muscle (397 aa).

A compositionally biased stretch (acidic residues) spans 1 to 16 (MSDDEEYTSSEEEEVV). Disordered stretches follow at residues 1–148 (MSDD…NFTI), 234–261 (ERQK…YPPK), and 294–397 (DSNE…EEEE). 3 stretches are compositionally biased toward basic and acidic residues: residues 37-77 (EFIK…LKEK), 84-129 (TRAE…EKKR), and 136-148 (MKDK…NFTI). 2 stretches are compositionally biased toward basic and acidic residues: residues 294–307 (DSNE…KEQY) and 319–329 (FGERPGKKAGE). The segment covering 331–397 (ETPEGEEDAK…EEEEEEEEEE (67 aa)) has biased composition (acidic residues).

Belongs to the troponin T family. Some glutamate residues are polyglycylated by TTLL3B. This modification occurs exclusively on glutamate residues and results in polyglycine chains on the gamma-carboxyl group. Isoform 3 is expressed in the hypoderm. Isoform 8 is expressed in the dorsal vessel. Isoform 6 is expressed in adult TDT muscle and isoform 9 in adult IFM, flight and jump muscles.

Troponin T is the tropomyosin-binding subunit of troponin, the thin filament regulatory complex which confers calcium-sensitivity to striated muscle actomyosin ATPase activity. The protein is Troponin T, skeletal muscle (up) of Drosophila melanogaster (Fruit fly).